Here is a 499-residue protein sequence, read N- to C-terminus: Alpha-L-arabinofuranosidase B (499 aa).

An N-terminal signal peptide occupies residues 1–18; the sequence is MFSRRNLVALGLAATVSA. N-linked (GlcNAc...) asparagine glycosylation is found at Asn83 and Asn202.

The protein belongs to the glycosyl hydrolase 54 family.

The enzyme catalyses Hydrolysis of terminal non-reducing alpha-L-arabinofuranoside residues in alpha-L-arabinosides.. Its pathway is glycan metabolism; L-arabinan degradation. Its function is as follows. Able to hydrolyze 1,5-, 1,3- and 1,2-alpha-linkages not only in L-arabinofuranosyl oligosaccharides, but also in polysac-charides containing terminal non-reducing L-arabinofuranoses in side chains, like L-arabinan, arabinogalactan and arabinoxylan. The chain is Alpha-L-arabinofuranosidase B (abfB) from Aspergillus niger.